The following is a 201-amino-acid chain: UPF0301 protein RHE_CH00966 (201 aa).

Belongs to the UPF0301 (AlgH) family.

The chain is UPF0301 protein RHE_CH00966 from Rhizobium etli (strain ATCC 51251 / DSM 11541 / JCM 21823 / NBRC 15573 / CFN 42).